A 433-amino-acid chain; its full sequence is Serine--tRNA ligase (433 aa).

235-237 lines the L-serine pocket; it reads TSE. Position 266 to 268 (266 to 268) interacts with ATP; it reads RSE. Glu289 is an L-serine binding site. 353 to 356 is a binding site for ATP; the sequence is EISS. Ser388 lines the L-serine pocket.

The protein belongs to the class-II aminoacyl-tRNA synthetase family. Type-1 seryl-tRNA synthetase subfamily. In terms of assembly, homodimer. The tRNA molecule binds across the dimer.

It is found in the cytoplasm. The enzyme catalyses tRNA(Ser) + L-serine + ATP = L-seryl-tRNA(Ser) + AMP + diphosphate + H(+). It catalyses the reaction tRNA(Sec) + L-serine + ATP = L-seryl-tRNA(Sec) + AMP + diphosphate + H(+). It participates in aminoacyl-tRNA biosynthesis; selenocysteinyl-tRNA(Sec) biosynthesis; L-seryl-tRNA(Sec) from L-serine and tRNA(Sec): step 1/1. Functionally, catalyzes the attachment of serine to tRNA(Ser). Is also able to aminoacylate tRNA(Sec) with serine, to form the misacylated tRNA L-seryl-tRNA(Sec), which will be further converted into selenocysteinyl-tRNA(Sec). The protein is Serine--tRNA ligase of Burkholderia lata (strain ATCC 17760 / DSM 23089 / LMG 22485 / NCIMB 9086 / R18194 / 383).